Consider the following 79-residue polypeptide: Small cysteine-rich protein 2 (79 aa).

The N-terminal stretch at 1 to 21 is a signal peptide; the sequence is MRSQHVLILLLGLVCASQVLG. Positions 22–35 are excised as a propeptide; sequence KHLTKVKAKALHYD.

The protein belongs to the Cnidaria small cysteine-rich protein (SCRiP) family. delta subfamily. In terms of processing, contains 4 disulfide bonds.

Its subcellular location is the secreted. The protein resides in the nematocyst. This recombinant protein induces severe neurotoxicity on zebrafish larvae (Danio rerio) at a concentration of 230 mg/ml, but does not show toxicity when injected in blowfly larvae (Sarcophaga falculata). All fish incubated with this protein died within 200 minutes of exposure. Has also been claimed to be implied in calcification, but this function seems improbable. In Acropora millepora (Staghorn coral), this protein is Small cysteine-rich protein 2.